Here is a 319-residue protein sequence, read N- to C-terminus: tRNA uridine(34) hydroxylase (319 aa).

The 99-residue stretch at Gly-123–Ser-221 folds into the Rhodanese domain. Catalysis depends on Cys-181, which acts as the Cysteine persulfide intermediate. Residues Ala-298–Arg-319 are disordered.

This sequence belongs to the TrhO family.

It catalyses the reaction uridine(34) in tRNA + AH2 + O2 = 5-hydroxyuridine(34) in tRNA + A + H2O. Functionally, catalyzes oxygen-dependent 5-hydroxyuridine (ho5U) modification at position 34 in tRNAs. This chain is tRNA uridine(34) hydroxylase, found in Albidiferax ferrireducens (strain ATCC BAA-621 / DSM 15236 / T118) (Rhodoferax ferrireducens).